A 361-amino-acid polypeptide reads, in one-letter code: Probable purine permease 5 (361 aa).

Transmembrane regions (helical) follow at residues 37–57 (WILL…SSLL), 70–90 (WIIS…LLPT), 105–125 (LVLS…MYAY), 134–154 (TSSL…YLIV), 158–178 (LNAS…IIAL), 193–213 (YFAG…IFAL), 235–255 (VMVS…SNDF), 285–305 (LGVL…AGVL), and 315–335 (VAAV…SLVL). In terms of domain architecture, EamA spans 75–178 (VAVAGWPITC…ITGAMAIIAL (104 aa)).

This sequence belongs to the purine permeases (TC 2.A.7.14) family.

Its subcellular location is the membrane. This is Probable purine permease 5 (PUP5) from Arabidopsis thaliana (Mouse-ear cress).